Reading from the N-terminus, the 378-residue chain is Erythronate-4-phosphate dehydrogenase (378 aa).

The substrate site is built by Ser45 and Thr66. Positions 146 and 175 each coordinate NAD(+). Residue Arg208 is part of the active site. Asp232 serves as a coordination point for NAD(+). Glu237 is an active-site residue. Catalysis depends on His254, which acts as the Proton donor. Gly257 lines the NAD(+) pocket. Tyr258 is a binding site for substrate.

This sequence belongs to the D-isomer specific 2-hydroxyacid dehydrogenase family. PdxB subfamily. In terms of assembly, homodimer.

It localises to the cytoplasm. The catalysed reaction is 4-phospho-D-erythronate + NAD(+) = (R)-3-hydroxy-2-oxo-4-phosphooxybutanoate + NADH + H(+). The protein operates within cofactor biosynthesis; pyridoxine 5'-phosphate biosynthesis; pyridoxine 5'-phosphate from D-erythrose 4-phosphate: step 2/5. In terms of biological role, catalyzes the oxidation of erythronate-4-phosphate to 3-hydroxy-2-oxo-4-phosphonooxybutanoate. This chain is Erythronate-4-phosphate dehydrogenase, found in Escherichia coli O45:K1 (strain S88 / ExPEC).